A 116-amino-acid polypeptide reads, in one-letter code: Ly-6/neurotoxin-like protein 1 (116 aa).

Positions 1-20 are cleaved as a signal peptide; the sequence is MTPLLTLILVVLMGLPLAQA. Residues 21–105 enclose the UPAR/Ly6 domain; that stretch reads LDCHVCAYNG…LATPATLALA (85 aa). 5 disulfides stabilise this stretch: Cys-23–Cys-46, Cys-26–Cys-33, Cys-39–Cys-64, Cys-68–Cys-85, and Cys-86–Cys-91. Residue Asn-92 is the site of GPI-anchor amidated asparagine attachment. A propeptide spans 93-116 (removed in mature form); that stretch reads GAGLATPATLALAPILLATLWGLL.

As to quaternary structure, interacts with nAChRs containing alpha-4:beta-2 (CHRNA4:CHRNB2) and alpha-7 (CHRNA7) subunits. Interacts with CHRNA4 probably in the endoplasmic reticulum prior to nAChR pentameric assembly. Interacts with KCNA2/Potassium voltage-gated channel subfamily A member 2.

The protein localises to the cell membrane. Its subcellular location is the cell projection. It is found in the dendrite. The protein resides in the endoplasmic reticulum. Acts in different tissues through interaction to nicotinic acetylcholine receptors (nAChRs). The proposed role as modulator of nAChR activity seems to be dependent on the nAChR subtype and stoichiometry, and to involve an effect on nAChR trafficking and its cell surface expression, and on single channel properties of the nAChR inserted in the plasma membrane. Modulates functional properties of nicotinic acetylcholine receptors (nAChRs) to prevent excessive excitation, and hence neurodegeneration. Enhances desensitization by increasing both the rate and extent of desensitization of alpha-4:beta-2-containing nAChRs and slowing recovery from desensitization. Promotes large amplitude ACh-evoked currents through alpha-4:beta-2 nAChRs. Is involved in regulation of the nAChR pentameric assembly in the endoplasmic reticulum. Shifts stoichiometry from high sensitivity alpha-4(2):beta-2(3) to low sensitivity alpha-4(3):beta-2(2) nAChR. In vitro modulates alpha-3:beta-4-containing nAChRs. Reduces cell surface expression of (alpha-3:beta-4)(2):beta-4 and (alpha-3:beta-4)(2):alpha-5 nAChRs suggesting an interaction with nAChR alpha-3(-):(+)beta-4 subunit interfaces and an allosteric mode. Corresponding single channel effects characterized by decreased unitary conductance, altered burst proportions and enhanced desensitization/inactivation seem to depend on nAChR alpha:alpha subunit interfaces and are greater in (alpha-3:beta-2)(2):alpha-3 when compared to (alpha-3:beta-2)(2):alpha-5 nAChRs. Prevents plasticity in the primary visual cortex late in life. This is Ly-6/neurotoxin-like protein 1 from Pan troglodytes (Chimpanzee).